The sequence spans 234 residues: Acetylxylan esterase 2 (234 aa).

Residues 1-17 (MHSKFFAASLLGLGAAA) form the signal peptide. The propeptide occupies 18–27 (IPLEGVMEKR). Intrachain disulfides connect Cys-29-Cys-106 and Cys-73-Cys-79. The active site involves Ser-117. Disulfide bonds link Cys-128/Cys-188, Cys-174/Cys-206, and Cys-198/Cys-205. Asp-202 is an active-site residue. N-linked (GlcNAc...) asparagine glycosylation occurs at Asn-207. Residue His-214 is part of the active site.

It belongs to the cutinase family. Acetylxylan esterase subfamily. Monomer.

The protein resides in the secreted. The enzyme catalyses Deacetylation of xylans and xylo-oligosaccharides.. It functions in the pathway glycan degradation; xylan degradation. Degrades acetylated xylans by cleaving acetyl side groups from the hetero-xylan backbone. The chain is Acetylxylan esterase 2 (axe-2) from Talaromyces purpureogenus (Soft rot fungus).